We begin with the raw amino-acid sequence, 400 residues long: Snake venom metalloproteinase H1 (400 aa).

The signal sequence occupies residues F1–S6. Positions S7–T176 are excised as a propeptide. One can recognise a Peptidase M12B domain in the interval R180–P377. Residues E183 and D267 each contribute to the Ca(2+) site. 3 cysteine pairs are disulfide-bonded: C291/C372, C331/C356, and C333/C339. H316 is a binding site for Zn(2+). E317 is an active-site residue. Positions 320 and 326 each coordinate Zn(2+). The Ca(2+) site is built by C372, N375, V387, N390, L392, E394, and D400. Residues L378 to D400 constitute a propeptide that is removed on maturation.

This sequence belongs to the venom metalloproteinase (M12B) family. P-I subfamily. Monomer. Requires Zn(2+) as cofactor. As to expression, expressed by the venom gland.

The protein localises to the secreted. Snake venom metalloproteinase that impairs hemostasis in the envenomed animal. This is Snake venom metalloproteinase H1 from Deinagkistrodon acutus (Hundred-pace snake).